Here is a 776-residue protein sequence, read N- to C-terminus: DNA topoisomerase 1 (776 aa).

In terms of domain architecture, Toprim spans 1 to 111 (MKLVIVESPA…VKSDDFFKRV (111 aa)). Mg(2+)-binding residues include glutamate 7 and aspartate 80. The Topo IA-type catalytic domain maps to 132-568 (DANLVNAQQA…FWSGFNHNIE (437 aa)). Residues 166-171 (SAGRVQ) form an interaction with DNA region. The active-site O-(5'-phospho-DNA)-tyrosine intermediate is tyrosine 304. The C4-type zinc finger occupies 600 to 627 (CPSCKTGELSLKLGKFGAFLACSNYPEC).

Belongs to the type IA topoisomerase family. In terms of assembly, monomer. Mg(2+) is required as a cofactor.

It carries out the reaction ATP-independent breakage of single-stranded DNA, followed by passage and rejoining.. In terms of biological role, releases the supercoiling and torsional tension of DNA, which is introduced during the DNA replication and transcription, by transiently cleaving and rejoining one strand of the DNA duplex. Introduces a single-strand break via transesterification at a target site in duplex DNA. The scissile phosphodiester is attacked by the catalytic tyrosine of the enzyme, resulting in the formation of a DNA-(5'-phosphotyrosyl)-enzyme intermediate and the expulsion of a 3'-OH DNA strand. The free DNA strand then undergoes passage around the unbroken strand, thus removing DNA supercoils. Finally, in the religation step, the DNA 3'-OH attacks the covalent intermediate to expel the active-site tyrosine and restore the DNA phosphodiester backbone. In Rickettsia felis (strain ATCC VR-1525 / URRWXCal2) (Rickettsia azadi), this protein is DNA topoisomerase 1.